The sequence spans 169 residues: uncharacterized protein (169 aa).

The Nudix hydrolase domain occupies 28–157; the sequence is ELHLVIHVCI…EFIPYFFLNQ (130 aa). Positions 65 to 87 match the Nudix box motif; that stretch reads AGSALKGETSQQAAEREVQEELG. Residues Glu-81 and Glu-85 each coordinate Mg(2+).

The protein belongs to the Nudix hydrolase family. Mg(2+) serves as cofactor.

This is an uncharacterized protein from Listeria monocytogenes serovar 1/2a (strain ATCC BAA-679 / EGD-e).